The following is a 262-amino-acid chain: Putative glutamine--fructose-6-phosphate aminotransferase [isomerizing] (262 aa).

Cys2 acts as the Nucleophile; for GATase activity in catalysis. One can recognise a Glutamine amidotransferase type-2 domain in the interval 2 to 262 (CGIFGYCNFL…RKSPPFVHNT (261 aa)).

It catalyses the reaction D-fructose 6-phosphate + L-glutamine = D-glucosamine 6-phosphate + L-glutamate. It functions in the pathway nucleotide-sugar biosynthesis; UDP-N-acetyl-alpha-D-glucosamine biosynthesis; alpha-D-glucosamine 6-phosphate from D-fructose 6-phosphate: step 1/1. Its function is as follows. Involved in amino sugar synthesis (formation of chitin, supplies the amino sugars of asparagine-linked oligosaccharides of glycoproteins). The chain is Putative glutamine--fructose-6-phosphate aminotransferase [isomerizing] from Saccharomyces cerevisiae (strain ATCC 204508 / S288c) (Baker's yeast).